The sequence spans 953 residues: Isoleucine--tRNA ligase (953 aa).

The 'HIGH' region signature appears at 57-67 (PYANGDIHIGH). Residue Glu582 coordinates L-isoleucyl-5'-AMP. A 'KMSKS' region motif is present at residues 623–627 (KMSKS). Lys626 provides a ligand contact to ATP. Zn(2+) contacts are provided by Cys916, Cys919, Cys936, and Cys939.

Belongs to the class-I aminoacyl-tRNA synthetase family. IleS type 1 subfamily. As to quaternary structure, monomer. Zn(2+) serves as cofactor.

The protein resides in the cytoplasm. The enzyme catalyses tRNA(Ile) + L-isoleucine + ATP = L-isoleucyl-tRNA(Ile) + AMP + diphosphate. Functionally, catalyzes the attachment of isoleucine to tRNA(Ile). As IleRS can inadvertently accommodate and process structurally similar amino acids such as valine, to avoid such errors it has two additional distinct tRNA(Ile)-dependent editing activities. One activity is designated as 'pretransfer' editing and involves the hydrolysis of activated Val-AMP. The other activity is designated 'posttransfer' editing and involves deacylation of mischarged Val-tRNA(Ile). In Bordetella parapertussis (strain 12822 / ATCC BAA-587 / NCTC 13253), this protein is Isoleucine--tRNA ligase.